Here is a 574-residue protein sequence, read N- to C-terminus: Sulfate adenylyltransferase (574 aa).

Residues 1–169 (MANPPHGGVL…IEAINKLNHY (169 aa)) are N-terminal. The interval 170–394 (DYVALRYTPA…LRESSPPRHT (225 aa)) is catalytic. Q197 provides a ligand contact to sulfate. ATP-binding positions include 197-200 (QTRN) and 291-294 (GRDH). Residues T198, R199, and N200 contribute to the active site. Residue R199 participates in sulfate binding. A295 is a binding site for sulfate. Residue V333 participates in ATP binding. Residues 395–574 (QGFTIFLTGY…LETEGFFDRS (180 aa)) form an allosteric regulation domain; adenylyl-sulfate kinase-like region. 3'-phosphoadenylyl sulfate contacts are provided by residues 434–437 (DTVR), R451, 477–478 (IA), and R516.

In the N-terminal section; belongs to the sulfate adenylyltransferase family. It in the C-terminal section; belongs to the APS kinase family. Homohexamer. Dimer of trimers.

The protein resides in the cytoplasm. It carries out the reaction sulfate + ATP + H(+) = adenosine 5'-phosphosulfate + diphosphate. It participates in sulfur metabolism; hydrogen sulfide biosynthesis; sulfite from sulfate: step 1/3. Allosterically inhibited by 3'-phosphoadenosine 5'-phosphosulfate (PAPS). Functionally, catalyzes the first intracellular reaction of sulfate assimilation, forming adenosine-5'-phosphosulfate (APS) from inorganic sulfate and ATP. Plays an important role in sulfate activation as a component of the biosynthesis pathway of sulfur-containing amino acids. The protein is Sulfate adenylyltransferase of Aspergillus fumigatus (strain ATCC MYA-4609 / CBS 101355 / FGSC A1100 / Af293) (Neosartorya fumigata).